The following is a 598-amino-acid chain: Aspartate--tRNA(Asp/Asn) ligase (598 aa).

L-aspartate is bound at residue Glu-174. Positions 198 to 201 (QQLK) are aspartate. Residue Arg-220 participates in L-aspartate binding. Residues 220-222 (RDE) and Gln-229 contribute to the ATP site. L-aspartate is bound at residue His-458. Residue Glu-492 participates in ATP binding. Arg-499 provides a ligand contact to L-aspartate. Residue 544-547 (GIDR) coordinates ATP.

The protein belongs to the class-II aminoacyl-tRNA synthetase family. Type 1 subfamily. In terms of assembly, homodimer.

It is found in the cytoplasm. The enzyme catalyses tRNA(Asx) + L-aspartate + ATP = L-aspartyl-tRNA(Asx) + AMP + diphosphate. Its function is as follows. Aspartyl-tRNA synthetase with relaxed tRNA specificity since it is able to aspartylate not only its cognate tRNA(Asp) but also tRNA(Asn). Reaction proceeds in two steps: L-aspartate is first activated by ATP to form Asp-AMP and then transferred to the acceptor end of tRNA(Asp/Asn). The polypeptide is Aspartate--tRNA(Asp/Asn) ligase (Dehalococcoides mccartyi (strain ATCC BAA-2266 / KCTC 15142 / 195) (Dehalococcoides ethenogenes (strain 195))).